Here is a 248-residue protein sequence, read N- to C-terminus: Protein FAM133A (248 aa).

The segment covering 68–80 (NWKKELEKSREKL) has biased composition (basic and acidic residues). The tract at residues 68–248 (NWKKELEKSR…KKSGSSHKSR (181 aa)) is disordered. Basic residues predominate over residues 90 to 102 (KRERKKKRKKKSC). A compositionally biased stretch (low complexity) spans 103–118 (RSSSSSSSSDSSSSSS). Basic residues predominate over residues 127 to 138 (QGKRRKKKKNRS). Composition is skewed to basic and acidic residues over residues 147–156 (HESESESKES), 163–175 (SKDETEKEKDVRS), and 211–220 (RCEEREQAKE). Positions 221 to 248 (KVKKKKKKQHKKHSKKKKKKSGSSHKSR) are enriched in basic residues.

The protein belongs to the FAM133 family.

The protein is Protein FAM133A (FAM133A) of Homo sapiens (Human).